The following is a 717-amino-acid chain: MTKLAQWMFEQYVKDLNLKNRGSPSFRKWLTLQPSLLRYSGVMRANAFDILKYGYPMQQSGYTVATLEIHFKNIRSSFANIYWNRDSEEPEYVCCCATYQSHDGEYRYRFVWYQPFIEAYNAIEAALDPLETIILNLIAARDLDFVVHIFPYNKGHEDYLASTQLILKIFIATLLMDILRIKDNTLDVHLNSDYIIVMERLWPHIKDAIEHFFEAHKDLLGYLIAFRNGGNFAGSLRPSCGQKIVPLTIREALQMNDINLAVWREVFIMQECSDLVINGIAPCFPIFNTWTYLQGINQIFFENTSLQEKFKKDFIARELSKEIIKGQKTLNDKEFKKLSLHQIQYMESFLLMSDVAIMITTEYVGYTLQSLPGIISRSSYLSPIVKNILMDEDSFMSLLFDLCYGAYVLHKKENVIHADLHLNNMTYYHFNPTSFTDRNKPGKYTLKVKNPVIAFITGPKVETETYVFKHIDGFGCIIDFSRAIMGPNHAIKLERQYGLAFVNTFYRNQSEHILKVLRFYFPEMLTNRENEIQGVILSNFNFFFNSITAIDFYAIARNLRSMLSLDYLHTSEVKRNVEISQTFLDTCQFLEEKAVEFLFKNLHTVLSGKPVEKTAGDVLLPIVFKKFLYPNIPKNILRSFTVIDVYNYNNIKRYSGKAIQTFPPWAQTKEILTHAEGRTFEDIFPRGELVFKKAYAENNHLDKILQRIREQLANENL.

The protein belongs to the asfivirus C717R family.

The protein resides in the virion. This is an uncharacterized protein from Ornithodoros (relapsing fever ticks).